The chain runs to 145 residues: D-aminoacyl-tRNA deacylase (145 aa).

Positions 137-138 match the Gly-cisPro motif, important for rejection of L-amino acids motif; the sequence is GP.

Belongs to the DTD family. In terms of assembly, homodimer.

Its subcellular location is the cytoplasm. It catalyses the reaction glycyl-tRNA(Ala) + H2O = tRNA(Ala) + glycine + H(+). The catalysed reaction is a D-aminoacyl-tRNA + H2O = a tRNA + a D-alpha-amino acid + H(+). An aminoacyl-tRNA editing enzyme that deacylates mischarged D-aminoacyl-tRNAs. Also deacylates mischarged glycyl-tRNA(Ala), protecting cells against glycine mischarging by AlaRS. Acts via tRNA-based rather than protein-based catalysis; rejects L-amino acids rather than detecting D-amino acids in the active site. By recycling D-aminoacyl-tRNA to D-amino acids and free tRNA molecules, this enzyme counteracts the toxicity associated with the formation of D-aminoacyl-tRNA entities in vivo and helps enforce protein L-homochirality. In Idiomarina loihiensis (strain ATCC BAA-735 / DSM 15497 / L2-TR), this protein is D-aminoacyl-tRNA deacylase.